Here is a 130-residue protein sequence, read N- to C-terminus: Osteocrin (130 aa).

The N-terminal stretch at 1–25 (MLDWRLASTHFILAMIVMLWGSGKA) is a signal peptide. The residue at position 129 (Arg-129) is an Arginine amide.

The protein belongs to the Osteocrin family. Interacts with NPR3. Expressed in skeletal muscle and to a much lesser extent in bone, brown adipose tissue, spleen and testis. Not expressed in neurons.

It is found in the secreted. In terms of biological role, hormone that acts as a ligand for natriuretic peptide receptor NPR3/NPR-C and promotes bone growth and physical endurance in muscle. Acts as a regulator of osteoblast differentiation and bone growth by binding to natriuretic peptide receptor NPR3/NPR-C, thereby preventing binding between NPR3/NPR-C and natriuretic peptides, leading to increase cGMP production. Required to enhance physical endurance: induced following physical exercise in muscle and promotes cGMP production, probably by interacting with NPR3/NPR-C. May act as an autocrine and paracrine factor linked to glucose metabolism in skeletal muscle. This chain is Osteocrin, found in Mus musculus (Mouse).